A 478-amino-acid polypeptide reads, in one-letter code: 5-hydroxytryptamine receptor 3A (478 aa).

Residues M1–A23 form the signal peptide. The Extracellular portion of the chain corresponds to R24–R241. Residues N28, N104, N170, and N186 are each glycosylated (N-linked (GlcNAc...) asparagine). An intrachain disulfide couples C157 to C171. The chain crosses the membrane as a helical span at residues P242–P268. Topologically, residues N269–R273 are cytoplasmic. A helical membrane pass occupies residues V274–S292. Residues D293 to T302 are Extracellular-facing. A helical membrane pass occupies residues P303 to A321. Topologically, residues E322–H455 are cytoplasmic. The tract at residues G389–P408 is disordered. Residues D393 to C402 are compositionally biased toward basic and acidic residues. The HA-stretch; determines single-channel conductance in 5-HT3 receptors stretch occupies residues A414 to D450. The chain crosses the membrane as a helical span at residues I456–W475. Over Q476–A478 the chain is Extracellular.

It belongs to the ligand-gated ion channel (TC 1.A.9) family. 5-hydroxytryptamine receptor (TC 1.A.9.2) subfamily. HTR3A sub-subfamily. As to quaternary structure, forms homopentameric as well as heteropentameric serotonin-activated cation-selective channel complexes with HTR3B or HTR3C or HTR3D or HTR3E. The homomeric complex is functional but exhibits low conductance with modified voltage dependence, and decreased agonist and antagonist affinity. Heteropentameric complexes display properties which resemble that of neuronal serotonin-activated channels in vivo. Interacts with RIC3. Expressed in cerebral cortex, amygdala, hippocampus, and testis. Detected in monocytes of the spleen and tonsil, in small and large intestine, uterus, prostate, ovary and placenta.

The protein resides in the postsynaptic cell membrane. The protein localises to the cell membrane. It carries out the reaction Na(+)(in) = Na(+)(out). It catalyses the reaction K(+)(in) = K(+)(out). The enzyme catalyses Ca(2+)(in) = Ca(2+)(out). The catalysed reaction is Mg(2+)(in) = Mg(2+)(out). Its function is as follows. Forms serotonin (5-hydroxytryptamine/5-HT3)-activated cation-selective channel complexes, which when activated cause fast, depolarizing responses in neurons. This Homo sapiens (Human) protein is 5-hydroxytryptamine receptor 3A.